The chain runs to 369 residues: Gap junction alpha-5 protein (369 aa).

Over 2–19 the chain is Cytoplasmic; that stretch reads GDWSFLGEFLEEVHKHST. Residues 20-40 traverse the membrane as a helical segment; it reads VVGKVWLTVLFIFRMLVLGTA. The Extracellular segment spans residues 41 to 76; the sequence is AGPLWGDEQSDFMCDTQQPGCENVCYDKAFPISHVR. The helical transmembrane segment at 77-97 threads the bilayer; it reads FWVLQIIFVSTPSLVYMGHAM. Residues 98–169 are Cytoplasmic-facing; the sequence is HTVRMEEKRK…YSILIRTAME (72 aa). Residues 170–190 form a helical membrane-spanning segment; it reads IAFIVGQYILYGIFLETLYIC. At 191 to 210 the chain is on the extracellular side; sequence QRAPCPHPVNCYVSRPTEKN. The chain crosses the membrane as a helical span at residues 211-231; the sequence is VFIIFMLAVAVLSLFLSLAEL. The Cytoplasmic segment spans residues 232 to 369; the sequence is YHLGWKKAKE…SKARSDDLSV (138 aa). Residues 347–369 form a disordered region; sequence NEKRRFSKASRASSKARSDDLSV.

The protein belongs to the connexin family. Alpha-type (group II) subfamily. In terms of assembly, a connexon is composed of a hexamer of connexins. In terms of tissue distribution, mostly in heart, and in the whole embryo, liver, stomach, and pectoral muscle.

Its subcellular location is the cell membrane. It localises to the cell junction. It is found in the gap junction. Functionally, one gap junction consists of a cluster of closely packed pairs of transmembrane channels, the connexons, through which materials of low MW diffuse from one cell to a neighboring cell. This is Gap junction alpha-5 protein (GJA5) from Gallus gallus (Chicken).